The primary structure comprises 451 residues: tRNA-2-methylthio-N(6)-dimethylallyladenosine synthase (451 aa).

An MTTase N-terminal domain is found at 18-134 (ARVYLETYGC…LPNLLDLAES (117 aa)). Positions 27, 63, 97, 170, 174, and 177 each coordinate [4Fe-4S] cluster. In terms of domain architecture, Radical SAM core spans 156 to 386 (RKNGHSAFLA…IALQQKISAE (231 aa)). In terms of domain architecture, TRAM spans 389-451 (RNDIGNTHEV…TSATLIGNAL (63 aa)).

The protein belongs to the methylthiotransferase family. MiaB subfamily. In terms of assembly, monomer. The cofactor is [4Fe-4S] cluster.

It localises to the cytoplasm. The enzyme catalyses N(6)-dimethylallyladenosine(37) in tRNA + (sulfur carrier)-SH + AH2 + 2 S-adenosyl-L-methionine = 2-methylsulfanyl-N(6)-dimethylallyladenosine(37) in tRNA + (sulfur carrier)-H + 5'-deoxyadenosine + L-methionine + A + S-adenosyl-L-homocysteine + 2 H(+). Catalyzes the methylthiolation of N6-(dimethylallyl)adenosine (i(6)A), leading to the formation of 2-methylthio-N6-(dimethylallyl)adenosine (ms(2)i(6)A) at position 37 in tRNAs that read codons beginning with uridine. In Chloroherpeton thalassium (strain ATCC 35110 / GB-78), this protein is tRNA-2-methylthio-N(6)-dimethylallyladenosine synthase.